The following is a 114-amino-acid chain: Small ribosomal subunit protein uS13m (114 aa).

The interval 92–114 (DGLPLRGQRSHTNARTSRKRIRK) is disordered.

Belongs to the universal ribosomal protein uS13 family. As to quaternary structure, part of the small ribosomal subunit.

The protein resides in the mitochondrion. Located at the top of the head of the small subunit, it contacts several helices of the 18S rRNA. This chain is Small ribosomal subunit protein uS13m (RPS13), found in Oenothera berteroana (Bertero's evening primrose).